A 224-amino-acid chain; its full sequence is Phosphoribosylformylglycinamidine synthase subunit PurQ (224 aa).

Residues 2 to 224 form the Glutamine amidotransferase type-1 domain; that stretch reads KIAVIVFPGS…SLLEEGKVKG (223 aa). The active-site Nucleophile is the C86. Catalysis depends on residues H195 and E197.

As to quaternary structure, part of the FGAM synthase complex composed of 1 PurL, 1 PurQ and 2 PurS subunits.

It localises to the cytoplasm. It carries out the reaction N(2)-formyl-N(1)-(5-phospho-beta-D-ribosyl)glycinamide + L-glutamine + ATP + H2O = 2-formamido-N(1)-(5-O-phospho-beta-D-ribosyl)acetamidine + L-glutamate + ADP + phosphate + H(+). It catalyses the reaction L-glutamine + H2O = L-glutamate + NH4(+). It functions in the pathway purine metabolism; IMP biosynthesis via de novo pathway; 5-amino-1-(5-phospho-D-ribosyl)imidazole from N(2)-formyl-N(1)-(5-phospho-D-ribosyl)glycinamide: step 1/2. In terms of biological role, part of the phosphoribosylformylglycinamidine synthase complex involved in the purines biosynthetic pathway. Catalyzes the ATP-dependent conversion of formylglycinamide ribonucleotide (FGAR) and glutamine to yield formylglycinamidine ribonucleotide (FGAM) and glutamate. The FGAM synthase complex is composed of three subunits. PurQ produces an ammonia molecule by converting glutamine to glutamate. PurL transfers the ammonia molecule to FGAR to form FGAM in an ATP-dependent manner. PurS interacts with PurQ and PurL and is thought to assist in the transfer of the ammonia molecule from PurQ to PurL. This Ligilactobacillus salivarius (strain UCC118) (Lactobacillus salivarius) protein is Phosphoribosylformylglycinamidine synthase subunit PurQ.